An 83-amino-acid polypeptide reads, in one-letter code: Exodeoxyribonuclease 7 small subunit (83 aa).

Residues 1-25 (MQDELFETEKAPPKNAKNAPKKSFE) form a disordered region.

It belongs to the XseB family. Heterooligomer composed of large and small subunits.

The protein localises to the cytoplasm. It carries out the reaction Exonucleolytic cleavage in either 5'- to 3'- or 3'- to 5'-direction to yield nucleoside 5'-phosphates.. Functionally, bidirectionally degrades single-stranded DNA into large acid-insoluble oligonucleotides, which are then degraded further into small acid-soluble oligonucleotides. In Helicobacter pylori (strain P12), this protein is Exodeoxyribonuclease 7 small subunit.